We begin with the raw amino-acid sequence, 449 residues long: CCA-adding enzyme (449 aa).

Residues Ser-57 and Arg-60 each contribute to the ATP site. Residues Ser-57 and Arg-60 each contribute to the CTP site. Asp-69, Asp-71, and Asp-124 together coordinate Mg(2+). ATP-binding residues include His-147, Lys-167, and Tyr-176. 3 residues coordinate CTP: His-147, Lys-167, and Tyr-176.

Belongs to the tRNA nucleotidyltransferase/poly(A) polymerase family. Archaeal CCA-adding enzyme subfamily. In terms of assembly, homodimer. It depends on Mg(2+) as a cofactor.

The enzyme catalyses a tRNA precursor + 2 CTP + ATP = a tRNA with a 3' CCA end + 3 diphosphate. It catalyses the reaction a tRNA with a 3' CCA end + 2 CTP + ATP = a tRNA with a 3' CCACCA end + 3 diphosphate. In terms of biological role, catalyzes the addition and repair of the essential 3'-terminal CCA sequence in tRNAs without using a nucleic acid template. Adds these three nucleotides in the order of C, C, and A to the tRNA nucleotide-73, using CTP and ATP as substrates and producing inorganic pyrophosphate. tRNA 3'-terminal CCA addition is required both for tRNA processing and repair. Also involved in tRNA surveillance by mediating tandem CCA addition to generate a CCACCA at the 3' terminus of unstable tRNAs. While stable tRNAs receive only 3'-terminal CCA, unstable tRNAs are marked with CCACCA and rapidly degraded. This Methanocaldococcus jannaschii (strain ATCC 43067 / DSM 2661 / JAL-1 / JCM 10045 / NBRC 100440) (Methanococcus jannaschii) protein is CCA-adding enzyme.